The sequence spans 208 residues: Imidazole glycerol phosphate synthase subunit HisH (208 aa).

Residues M1 to S206 enclose the Glutamine amidotransferase type-1 domain. C79 (nucleophile) is an active-site residue. Active-site residues include H181 and E183.

As to quaternary structure, heterodimer of HisH and HisF.

The protein localises to the cytoplasm. It catalyses the reaction 5-[(5-phospho-1-deoxy-D-ribulos-1-ylimino)methylamino]-1-(5-phospho-beta-D-ribosyl)imidazole-4-carboxamide + L-glutamine = D-erythro-1-(imidazol-4-yl)glycerol 3-phosphate + 5-amino-1-(5-phospho-beta-D-ribosyl)imidazole-4-carboxamide + L-glutamate + H(+). The enzyme catalyses L-glutamine + H2O = L-glutamate + NH4(+). It participates in amino-acid biosynthesis; L-histidine biosynthesis; L-histidine from 5-phospho-alpha-D-ribose 1-diphosphate: step 5/9. IGPS catalyzes the conversion of PRFAR and glutamine to IGP, AICAR and glutamate. The HisH subunit catalyzes the hydrolysis of glutamine to glutamate and ammonia as part of the synthesis of IGP and AICAR. The resulting ammonia molecule is channeled to the active site of HisF. This Listeria welshimeri serovar 6b (strain ATCC 35897 / DSM 20650 / CCUG 15529 / CIP 8149 / NCTC 11857 / SLCC 5334 / V8) protein is Imidazole glycerol phosphate synthase subunit HisH.